Reading from the N-terminus, the 160-residue chain is Transcription elongation factor GreA (160 aa).

Positions 14-76 form a coiled coil; sequence VKKLEEELEY…QLENMLKNAS (63 aa).

This sequence belongs to the GreA/GreB family.

Necessary for efficient RNA polymerase transcription elongation past template-encoded arresting sites. The arresting sites in DNA have the property of trapping a certain fraction of elongating RNA polymerases that pass through, resulting in locked ternary complexes. Cleavage of the nascent transcript by cleavage factors such as GreA or GreB allows the resumption of elongation from the new 3'terminus. GreA releases sequences of 2 to 3 nucleotides. The protein is Transcription elongation factor GreA of Clostridium botulinum (strain Okra / Type B1).